Here is a 338-residue protein sequence, read N- to C-terminus: 1-aminocyclopropane-1-carboxylate deaminase (338 aa).

Lys-51 is subject to N6-(pyridoxal phosphate)lysine. Ser-78 acts as the Nucleophile in catalysis.

The protein belongs to the ACC deaminase/D-cysteine desulfhydrase family. Homotrimer. Pyridoxal 5'-phosphate serves as cofactor.

It catalyses the reaction 1-aminocyclopropane-1-carboxylate + H2O = 2-oxobutanoate + NH4(+). In terms of biological role, catalyzes a cyclopropane ring-opening reaction, the irreversible conversion of 1-aminocyclopropane-1-carboxylate (ACC) to ammonia and alpha-ketobutyrate. Allows growth on ACC as a nitrogen source. This Pseudomonas syringae pv. syringae (strain B728a) protein is 1-aminocyclopropane-1-carboxylate deaminase.